The chain runs to 936 residues: Protocadherin gamma-A10 (936 aa).

The N-terminal stretch at 1–32 (MAAQRNRSKESKDCSGLVLLCLFFGIPWEAGA) is a signal peptide. 6 Cadherin domains span residues 33 to 137 (RQIS…APTF), 138 to 246 (QAEN…APVF), 247 to 351 (TLPE…SPEL), 352 to 456 (TITS…PPTF), 457 to 566 (SQVS…APEI), and 574 to 687 (DGST…SPAN). The Extracellular portion of the chain corresponds to 33–696 (RQISYSIPEE…NSETSDLTLY (664 aa)). Residue Asn51 is glycosylated (N-linked (GlcNAc...) asparagine). N-linked (GlcNAc...) asparagine glycosylation is found at Asn423 and Asn549. A helical transmembrane segment spans residues 697–717 (LVVAVAAVSCVFLAFVIVLLA). Over 718 to 936 (LRLRRWHKSR…KKKSGKKEKK (219 aa)) the chain is Cytoplasmic. Disordered stretches follow at residues 801–845 (SKFP…WPNN) and 906–936 (ATLT…KEKK). Polar residues predominate over residues 820 to 845 (WRFSQAQRPGTSGSQNGDDTGTWPNN). The segment covering 926–936 (NKKKSGKKEKK) has biased composition (basic residues).

Its subcellular location is the cell membrane. Potential calcium-dependent cell-adhesion protein. May be involved in the establishment and maintenance of specific neuronal connections in the brain. This is Protocadherin gamma-A10 (PCDHGA10) from Pan troglodytes (Chimpanzee).